The following is a 232-amino-acid chain: Uracil phosphoribosyltransferase (232 aa).

Residue 38-42 (KGLVR) coordinates GTP. Residues arginine 87, arginine 112, and 140 to 148 (DPMIATGST) contribute to the 5-phospho-alpha-D-ribose 1-diphosphate site. Uracil is bound by residues isoleucine 204 and 209–211 (GDA). Aspartate 210 is a 5-phospho-alpha-D-ribose 1-diphosphate binding site.

This sequence belongs to the UPRTase family. Mg(2+) serves as cofactor.

It catalyses the reaction UMP + diphosphate = 5-phospho-alpha-D-ribose 1-diphosphate + uracil. It functions in the pathway pyrimidine metabolism; UMP biosynthesis via salvage pathway; UMP from uracil: step 1/1. With respect to regulation, allosterically activated by GTP. In terms of biological role, catalyzes the conversion of uracil and 5-phospho-alpha-D-ribose 1-diphosphate (PRPP) to UMP and diphosphate. The polypeptide is Uracil phosphoribosyltransferase (Methanococcus vannielii (strain ATCC 35089 / DSM 1224 / JCM 13029 / OCM 148 / SB)).